Reading from the N-terminus, the 341-residue chain is Very-long-chain 3-oxoacyl-CoA reductase (341 aa).

A helical transmembrane segment spans residues Ala-22–Ile-42. Residues Leu-67, Asp-123, Asp-131, Asn-150, Tyr-217, Lys-221, Val-250, and Thr-252 each coordinate NADP(+). Residue Tyr-217 is the Proton donor of the active site. Lys-221 serves as the catalytic Lowers pKa of active site Tyr.

The protein belongs to the short-chain dehydrogenases/reductases (SDR) family.

The protein resides in the endoplasmic reticulum membrane. It carries out the reaction a very-long-chain (3R)-3-hydroxyacyl-CoA + NADP(+) = a very-long-chain 3-oxoacyl-CoA + NADPH + H(+). It participates in lipid metabolism; fatty acid biosynthesis. Its function is as follows. Component of the microsomal membrane bound fatty acid elongation system, which produces the 26-carbon very long-chain fatty acids (VLCFA) from palmitate. Catalyzes the reduction of the 3-ketoacyl-CoA intermediate that is formed in each cycle of fatty acid elongation. VLCFAs serve as precursors for ceramide and sphingolipids. This Pyrenophora tritici-repentis (strain Pt-1C-BFP) (Wheat tan spot fungus) protein is Very-long-chain 3-oxoacyl-CoA reductase.